Reading from the N-terminus, the 195-residue chain is O-methyltransferase (195 aa).

It belongs to the methyltransferase superfamily.

The protein operates within secondary metabolite biosynthesis. Functionally, O-methyltransferase; part of the gene cluster that mediates the biosynthesis of pyrophen and campyrone B, which represent a class of fungal amino acid-derived alpha-pyrone natural products. The first step of pyrophen biosynthesis is catalyzed by the PKS-NRPS hybrid synthetase ATPKS that uptakes and condensates L-phenylalanine and malonyl-CoA in order to produce desmethyldesacetylpyrophen. Although the A domain does not discriminate between 2 enantiomeric phenylalanines, the downstream KS domain must play a gate keeping role to stereoselectively accept the L-phenylalanyl-S-phosphopantetheine (Ppant)-T domain intermediate for chain elongation. The resulting amino acid derived diketide is off-loaded through lactonization to yield the alpha-pyrone intermediate desmethyldesacetylpyrophen. The cluster-specific O-methyltransferase (OMT) then methylates desmethyldesacetylpyrophen to desacetylpyrophen, which is further acetylated to pyrophen by an endogenous yet unidentified N-acetyltransferase. ATPKS has relaxed substrate specificity to activate and extend branched-chain amino acid L-leucine to produce small amounts of campyrone B. This is O-methyltransferase from Aspergillus niger (strain ATCC 1015 / CBS 113.46 / FGSC A1144 / LSHB Ac4 / NCTC 3858a / NRRL 328 / USDA 3528.7).